Here is a 410-residue protein sequence, read N- to C-terminus: Cysteine desulfurase IscS (410 aa).

Pyridoxal 5'-phosphate contacts are provided by residues 80 to 81, asparagine 160, glutamine 188, and 208 to 210; these read AT and SGH. Residue lysine 211 is modified to N6-(pyridoxal phosphate)lysine. Threonine 248 is a pyridoxal 5'-phosphate binding site. Residue cysteine 334 is the Cysteine persulfide intermediate of the active site. [2Fe-2S] cluster is bound at residue cysteine 334.

This sequence belongs to the class-V pyridoxal-phosphate-dependent aminotransferase family. NifS/IscS subfamily. In terms of assembly, homodimer. Forms a heterotetramer with IscU, interacts with other sulfur acceptors. Pyridoxal 5'-phosphate serves as cofactor.

Its subcellular location is the cytoplasm. The enzyme catalyses (sulfur carrier)-H + L-cysteine = (sulfur carrier)-SH + L-alanine. Its pathway is cofactor biosynthesis; iron-sulfur cluster biosynthesis. Master enzyme that delivers sulfur to a number of partners involved in Fe-S cluster assembly, tRNA modification or cofactor biosynthesis. Catalyzes the removal of elemental sulfur atoms from cysteine to produce alanine. Functions as a sulfur delivery protein for Fe-S cluster synthesis onto IscU, an Fe-S scaffold assembly protein, as well as other S acceptor proteins. The protein is Cysteine desulfurase IscS of Rickettsia typhi (strain ATCC VR-144 / Wilmington).